A 151-amino-acid polypeptide reads, in one-letter code: Probable calcium-binding protein CML31 (151 aa).

4 consecutive EF-hand domains span residues 14–42 (ALFA…TLGE), 44–79 (VSDE…AEVE), 84–119 (RRGT…LGSD), and 120–151 (QDID…MMNA). Positions 20, 22, 24, 26, 31, 57, 59, 61, and 68 each coordinate Ca(2+). Ca(2+) contacts are provided by Asp-133, Asn-135, Asp-137, and Glu-144.

Functionally, potential calcium sensor. The sequence is that of Probable calcium-binding protein CML31 (CML31) from Oryza sativa subsp. japonica (Rice).